We begin with the raw amino-acid sequence, 486 residues long: Siroheme synthase (486 aa).

The tract at residues 1–203 (MNYFPIFANL…RQNTLAEREL (203 aa)) is precorrin-2 dehydrogenase /sirohydrochlorin ferrochelatase. Residues 22–23 (AV) and 43–44 (KH) each bind NAD(+). Residue S128 is modified to Phosphoserine. A uroporphyrinogen-III C-methyltransferase region spans residues 217–486 (GSVSLVGAGP…LGTGQEQQAA (270 aa)). P226 provides a ligand contact to S-adenosyl-L-methionine. D249 acts as the Proton acceptor in catalysis. K271 acts as the Proton donor in catalysis. S-adenosyl-L-methionine contacts are provided by residues 302 to 304 (GGD), V307, 332 to 333 (TA), M384, and G413.

In the N-terminal section; belongs to the precorrin-2 dehydrogenase / sirohydrochlorin ferrochelatase family. The protein in the C-terminal section; belongs to the precorrin methyltransferase family.

It carries out the reaction uroporphyrinogen III + 2 S-adenosyl-L-methionine = precorrin-2 + 2 S-adenosyl-L-homocysteine + H(+). The enzyme catalyses precorrin-2 + NAD(+) = sirohydrochlorin + NADH + 2 H(+). The catalysed reaction is siroheme + 2 H(+) = sirohydrochlorin + Fe(2+). It functions in the pathway cofactor biosynthesis; adenosylcobalamin biosynthesis; precorrin-2 from uroporphyrinogen III: step 1/1. Its pathway is cofactor biosynthesis; adenosylcobalamin biosynthesis; sirohydrochlorin from precorrin-2: step 1/1. It participates in porphyrin-containing compound metabolism; siroheme biosynthesis; precorrin-2 from uroporphyrinogen III: step 1/1. The protein operates within porphyrin-containing compound metabolism; siroheme biosynthesis; siroheme from sirohydrochlorin: step 1/1. It functions in the pathway porphyrin-containing compound metabolism; siroheme biosynthesis; sirohydrochlorin from precorrin-2: step 1/1. Multifunctional enzyme that catalyzes the SAM-dependent methylations of uroporphyrinogen III at position C-2 and C-7 to form precorrin-2 via precorrin-1. Then it catalyzes the NAD-dependent ring dehydrogenation of precorrin-2 to yield sirohydrochlorin. Finally, it catalyzes the ferrochelation of sirohydrochlorin to yield siroheme. In Neisseria meningitidis serogroup A / serotype 4A (strain DSM 15465 / Z2491), this protein is Siroheme synthase.